A 394-amino-acid polypeptide reads, in one-letter code: uncharacterized protein (394 aa).

A run of 12 helical transmembrane segments spans residues 13 to 35, 50 to 72, 79 to 97, 107 to 129, 136 to 158, 168 to 190, 218 to 240, 250 to 272, 277 to 299, 309 to 331, 344 to 366, and 371 to 393; these read AIIG…VPVL, VGVA…GWLS, LIIN…IAWS, GRGL…ELVL, IMGL…SPII, FLIN…PASL, INLS…PVEL, VPEI…CICF, VLYS…GIFL, ILGL…ALVN, AIYS…ILFS, and FEVL…LYLI.

The protein belongs to the major facilitator superfamily.

The protein localises to the cell membrane. This is an uncharacterized protein from Buchnera aphidicola subsp. Baizongia pistaciae (strain Bp).